A 656-amino-acid chain; its full sequence is Pyoverdine export ATP-binding/permease protein PvdT (656 aa).

The ABC transporter domain occupies 6-245 (IDLRGIRKSY…SANPAALQAV (240 aa)). ATP is bound at residue 43 to 50 (GASGSGKS). 4 consecutive transmembrane segments (helical) span residues 284–304 (ALTL…LAVG), 538–558 (IAAI…LMTV), 589–609 (LSVV…AALL), and 619–639 (LSAV…FGFM).

Belongs to the ABC transporter superfamily. Macrolide exporter (TC 3.A.1.122) family. Part of the tripartite efflux system PvdRT-OpmQ, which is composed of an inner membrane component with both ATPase and permease domains, PvdT, a periplasmic membrane fusion protein, PvdR, and an outer membrane component, OpmQ.

Its subcellular location is the cell inner membrane. In terms of biological role, part of the tripartite efflux system PvdRT-OpmQ required for the secretion into the extracellular milieu of the siderophore pyoverdine (PVD), which is involved in iron acquisition. This subunit binds PVD and drives its secretion by hydrolyzing ATP. The system is responsible for export of newly synthesized PVD after the final steps of biosynthesis have taken place in the periplasm. It is also responsible for recycling of PVD after internalization of ferri-PVD into the periplasm by the outer-membrane receptor FpvA and release of iron from PVD, thus making PVD available for new cycles of iron uptake. The chain is Pyoverdine export ATP-binding/permease protein PvdT from Pseudomonas syringae pv. tomato (strain ATCC BAA-871 / DC3000).